A 325-amino-acid polypeptide reads, in one-letter code: Golgi to ER traffic protein 4 homolog B (325 aa).

Disordered stretches follow at residues 1-22 (MAAA…GGVQ) and 306-325 (SGED…IELD). Positions 307–317 (GEDDDVEDGQE) are enriched in acidic residues.

Belongs to the GET4 family. As to quaternary structure, component of the bag6/bat3 complex.

Its subcellular location is the cytoplasm. The protein resides in the cytosol. Its function is as follows. As part of a cytosolic protein quality control complex, the bag6/bat3 complex, maintains misfolded and hydrophobic patches-containing proteins in a soluble state and participates in their proper delivery to the endoplasmic reticulum or alternatively can promote their sorting to the proteasome where they undergo degradation. The bag6/bat3 complex is involved in the post-translational delivery of tail-anchored/type II transmembrane proteins to the endoplasmic reticulum membrane. Similarly, the bag6/bat3 complex also functions as a sorting platform for proteins of the secretory pathway that are mislocalized to the cytosol either delivering them to the proteasome for degradation or to the endoplasmic reticulum. The bag6/bat3 complex also plays a role in the endoplasmic reticulum-associated degradation (ERAD), a quality control mechanism that eliminates unwanted proteins of the endoplasmic reticulum through their retrotranslocation to the cytosol and their targeting to the proteasome. It maintains these retrotranslocated proteins in an unfolded yet soluble state condition in the cytosol to ensure their proper delivery to the proteasome. The protein is Golgi to ER traffic protein 4 homolog B (get4-b) of Xenopus laevis (African clawed frog).